We begin with the raw amino-acid sequence, 483 residues long: Protein nucleotidyltransferase YdiU (483 aa).

ATP contacts are provided by G87, G89, R90, K110, D122, G123, R173, and R180. The active-site Proton acceptor is the D249. 2 residues coordinate Mg(2+): N250 and D259. D259 serves as a coordination point for ATP.

Belongs to the SELO family. Mg(2+) is required as a cofactor. Mn(2+) serves as cofactor.

The catalysed reaction is L-seryl-[protein] + ATP = 3-O-(5'-adenylyl)-L-seryl-[protein] + diphosphate. It catalyses the reaction L-threonyl-[protein] + ATP = 3-O-(5'-adenylyl)-L-threonyl-[protein] + diphosphate. The enzyme catalyses L-tyrosyl-[protein] + ATP = O-(5'-adenylyl)-L-tyrosyl-[protein] + diphosphate. It carries out the reaction L-histidyl-[protein] + UTP = N(tele)-(5'-uridylyl)-L-histidyl-[protein] + diphosphate. The catalysed reaction is L-seryl-[protein] + UTP = O-(5'-uridylyl)-L-seryl-[protein] + diphosphate. It catalyses the reaction L-tyrosyl-[protein] + UTP = O-(5'-uridylyl)-L-tyrosyl-[protein] + diphosphate. In terms of biological role, nucleotidyltransferase involved in the post-translational modification of proteins. It can catalyze the addition of adenosine monophosphate (AMP) or uridine monophosphate (UMP) to a protein, resulting in modifications known as AMPylation and UMPylation. This Pectobacterium carotovorum subsp. carotovorum (strain PC1) protein is Protein nucleotidyltransferase YdiU.